Here is a 423-residue protein sequence, read N- to C-terminus: Large ribosomal subunit protein mL37 (423 aa).

The transit peptide at 1-29 directs the protein to the mitochondrion; it reads MALASGPAMRALAGSARLGLGGYGAPKRG.

It belongs to the mitochondrion-specific ribosomal protein mL37 family. Component of the mitochondrial ribosome large subunit (39S) which comprises a 16S rRNA and about 50 distinct proteins.

The protein resides in the mitochondrion. This Rattus norvegicus (Rat) protein is Large ribosomal subunit protein mL37 (Mrpl37).